The sequence spans 585 residues: ATP-dependent lipid A-core flippase (585 aa).

6 helical membrane passes run 18-38, 68-88, 142-162, 163-183, 255-275, and 277-297; these read LWPT…ALVL, LMAV…FISS, SNAL…LAVM, IATS…IAVL, PIVQ…ATIP, and IMSQ…MLAM. Positions 30–313 constitute an ABC transmembrane type-1 domain; the sequence is IAAAAALVLN…LTNVNSQFQR (284 aa). Positions 345 to 581 constitute an ABC transporter domain; sequence VSFKDVSFTY…NGAYKQLHKM (237 aa). 379-386 provides a ligand contact to ATP; that stretch reads GRSGSGKS.

This sequence belongs to the ABC transporter superfamily. Lipid exporter (TC 3.A.1.106) family. Homodimer.

It localises to the cell inner membrane. It catalyses the reaction ATP + H2O + lipid A-core oligosaccharideSide 1 = ADP + phosphate + lipid A-core oligosaccharideSide 2.. Functionally, involved in lipopolysaccharide (LPS) biosynthesis. Translocates lipid A-core from the inner to the outer leaflet of the inner membrane. Transmembrane domains (TMD) form a pore in the inner membrane and the ATP-binding domain (NBD) is responsible for energy generation. This Mannheimia succiniciproducens (strain KCTC 0769BP / MBEL55E) protein is ATP-dependent lipid A-core flippase.